Reading from the N-terminus, the 237-residue chain is Regulator of G-protein signaling 9-binding protein (237 aa).

Over 1–212 (MAREECKALL…ERAGPCDPSK (212 aa)) the chain is Cytoplasmic. A coiled-coil region spans residues 30-54 (SADTQDLREELQKTRQKARELAVAT). The SNARE-like stretch occupies residues 153-202 (EVLQVGEMIDDMEMKVNVPRWTVQARQAAGAELLSGASAGASSAGGISVE). Residues 213–233 (ALAATVFSAVLLVAVALALCV) form a helical; Anchor for type IV membrane protein membrane-spanning segment. The Extracellular segment spans residues 234 to 237 (AKLS).

The protein belongs to the RGS7BP/RGS9BP family. Specifically interacts with isoform RGS9-1 of RGS9. Interaction is decreased when RGS9-1 is phosphorylated at 'Ser-475'. Component of the RGS9-1-Gbeta5 complex composed of RGS9-1, Gbeta5 (GNB5) and RGS9BP. In terms of tissue distribution, predominantly expressed in photoreceptors of the retina. Weakly expressed in other areas of the central nervous system.

The protein localises to the membrane. Regulator of G protein-coupled receptor (GPCR) signaling in phototransduction. Participates in the recovery phase of visual transduction via its interaction with RGS9-1 isoform. Acts as a membrane-anchor that mediates the targeting of RGS9-1 to the photoreceptor outer segment, where phototransduction takes place. Enhances the ability of RGS9-1 to stimulate G protein GTPase activity, allowing the visual signal to be terminated on the physiologically time scale. It also controls the proteolytic stability of RGS9-1, probably by protecting it from degradation. In Mus musculus (Mouse), this protein is Regulator of G-protein signaling 9-binding protein (Rgs9bp).